The chain runs to 242 residues: MIRVIFLDLDKTLLPEYDPEPAIPIVEELKKKGFEIVFNSSKTRAEQEYYREKLNVKGPFIVENGSAIYIPSNYFPFEVPGVKRGEYMVLELGVKVEEIRKALKELEAEYGLKYYGNSTDEEIEKFTKLPKHLIPLAKDREYSETIFLWKREGWEKDLIRKGFKVTMGSRFYAVHGNSDKGKAAKLLLDLYKRVDEVESYAVGDGENDFPMFDVVDFAFLIGDLRHENAENVTSIKDVLKKI.

The active-site Nucleophile is aspartate 8. Positions 8, 10, 169, and 204 each coordinate Mg(2+).

Belongs to the HAD-like hydrolase superfamily. MPGP family. Mg(2+) serves as cofactor.

The protein localises to the cytoplasm. The catalysed reaction is 2-O-(alpha-D-mannosyl)-3-phosphoglycerate + H2O = (2R)-2-O-(alpha-D-mannosyl)-glycerate + phosphate. Its pathway is carbohydrate biosynthesis; 2-(alpha-D-mannosyl)-D-glycerate biosynthesis; 2-(alpha-D-mannosyl)-D-glycerate from GDP-alpha-D-mannose (MPG route): step 2/2. In terms of biological role, hydrolyzes mannosyl-3-phosphoglycerate (MPG) to form the osmolyte mannosylglycerate (MG). This chain is Mannosyl-3-phosphoglycerate phosphatase, found in Pyrococcus furiosus (strain ATCC 43587 / DSM 3638 / JCM 8422 / Vc1).